We begin with the raw amino-acid sequence, 273 residues long: 3-methyl-2-oxobutanoate hydroxymethyltransferase 2 (273 aa).

Mg(2+) is bound by residues Asp50 and Asp89. 3-methyl-2-oxobutanoate is bound by residues 50-51 (DS), Asp89, and Lys119. Glu121 contacts Mg(2+). Glu188 acts as the Proton acceptor in catalysis.

This sequence belongs to the PanB family. As to quaternary structure, homodecamer; pentamer of dimers. It depends on Mg(2+) as a cofactor.

The protein resides in the cytoplasm. It carries out the reaction 3-methyl-2-oxobutanoate + (6R)-5,10-methylene-5,6,7,8-tetrahydrofolate + H2O = 2-dehydropantoate + (6S)-5,6,7,8-tetrahydrofolate. Its pathway is cofactor biosynthesis; (R)-pantothenate biosynthesis; (R)-pantoate from 3-methyl-2-oxobutanoate: step 1/2. Catalyzes the reversible reaction in which hydroxymethyl group from 5,10-methylenetetrahydrofolate is transferred onto alpha-ketoisovalerate to form ketopantoate. The protein is 3-methyl-2-oxobutanoate hydroxymethyltransferase 2 of Zymomonas mobilis subsp. mobilis (strain ATCC 31821 / ZM4 / CP4).